Reading from the N-terminus, the 345-residue chain is Opioid-binding protein/cell adhesion molecule (345 aa).

The first 27 residues, 1–27, serve as a signal peptide directing secretion; that stretch reads MGVCGYLFLPWKCLVVVSLRLLFLVPT. Ig-like C2-type domains follow at residues 39–126, 136–219, and 223–310; these read PKAM…PKTS, PQIM…VKIT, and PPYI…ASIT. 3 N-linked (GlcNAc...) asparagine glycosylation sites follow: Asn-44, Asn-70, and Asn-140. Cys-57 and Cys-115 are disulfide-bonded. 2 cysteine pairs are disulfide-bonded: Cys-157/Cys-202 and Cys-244/Cys-296. N-linked (GlcNAc...) asparagine glycosylation is found at Asn-285, Asn-293, and Asn-306. The GPI-anchor amidated asparagine moiety is linked to residue Asn-322. Positions 323–345 are cleaved as a propeptide — removed in mature form; the sequence is SASRALACLWLSGTLLAHFFIKF.

It belongs to the immunoglobulin superfamily. IgLON family.

Its subcellular location is the cell membrane. Binds opioids in the presence of acidic lipids; probably involved in cell contact. This chain is Opioid-binding protein/cell adhesion molecule (OPCML), found in Homo sapiens (Human).